We begin with the raw amino-acid sequence, 37 residues long: Tick defensin 2 (37 aa).

3 disulfides stabilise this stretch: Cys4/Cys26, Cys11/Cys34, and Cys15/Cys36.

It belongs to the invertebrate defensin family.

It localises to the secreted. Its function is as follows. Antibacterial peptide mostly active against Gram-positive bacteria (MIC=0.24 ug/ml on Bacillus subtilis, and MIC=0.94 ug/ml on Micrococcus luteus, MIC&gt;120 ug/ml on both Escherichia coli and Pseudomonas aeruginosa). The polypeptide is Tick defensin 2 (Ornithodoros savignyi (African eyed tampan)).